Reading from the N-terminus, the 135-residue chain is Large ribosomal subunit protein uL16c (135 aa).

Belongs to the universal ribosomal protein uL16 family. In terms of assembly, part of the 50S ribosomal subunit.

It localises to the plastid. The protein is Large ribosomal subunit protein uL16c of Epifagus virginiana (Beechdrops).